Reading from the N-terminus, the 268-residue chain is MSSEDTTSQRAPRNWWGPFAPIGEALRFLTILPVPGLPPMSEEAIPQSIRYFPIAGLVIGGILAAVGWGAGVLWNETVRAVVLVVAWGVLTAGMHLDGLSDTFDGVMSWRSRERKLEIMRDSRIGVMGALALAAVLGLKAAFLAGAGDAWLTAVVLAPVLGRWADVYGIVRFPPAREGGLGRTFQSYLRPGDFAGASVATLALALIVGGVGGLIALALVWMVTHLLGRWWTRDLGGLTGDTYGALCEIAEVVALATLTLSAPMRLLAT.

6 helical membrane-spanning segments follow: residues 54 to 74 (IAGL…GVLW), 80 to 100 (AVVL…DGLS), 124 to 144 (IGVM…AFLA), 150 to 170 (WLTA…YGIV), 202 to 222 (ALAL…VWMV), and 243 to 263 (GALC…SAPM).

The protein belongs to the CobS family. Mg(2+) is required as a cofactor.

It localises to the cell membrane. The enzyme catalyses alpha-ribazole + adenosylcob(III)inamide-GDP = adenosylcob(III)alamin + GMP + H(+). It catalyses the reaction alpha-ribazole 5'-phosphate + adenosylcob(III)inamide-GDP = adenosylcob(III)alamin 5'-phosphate + GMP + H(+). It participates in cofactor biosynthesis; adenosylcobalamin biosynthesis; adenosylcobalamin from cob(II)yrinate a,c-diamide: step 7/7. In terms of biological role, joins adenosylcobinamide-GDP and alpha-ribazole to generate adenosylcobalamin (Ado-cobalamin). Also synthesizes adenosylcobalamin 5'-phosphate from adenosylcobinamide-GDP and alpha-ribazole 5'-phosphate. In Roseiflexus sp. (strain RS-1), this protein is Adenosylcobinamide-GDP ribazoletransferase.